We begin with the raw amino-acid sequence, 425 residues long: 1,4-beta-D-glucan glucohydrolase (425 aa).

Glu164 functions as the Proton donor in the catalytic mechanism. Glu349 functions as the Nucleophile in the catalytic mechanism.

It belongs to the glycosyl hydrolase 1 family. As to quaternary structure, monomer.

It carries out the reaction Hydrolysis of (1-&gt;4)-linkages in (1-&gt;4)-beta-D-glucans, to remove successive glucose units.. The enzyme catalyses Hydrolysis of terminal, non-reducing beta-D-glucosyl residues with release of beta-D-glucose.. The protein operates within glycan metabolism; cellulose degradation. Its pathway is glycan metabolism; beta-D-glucan degradation. In terms of biological role, broad substrate specificity glycosidase. Releases glucose from soluble glucooligomers, with a preference for longer oligomers; acts more readily on cellotetraose than on cellobiose. Displays similar activities towards the disaccharides lactose and cellobiose. Is also able to hydrolyze various aryl-beta-glycosides in vitro. The protein is 1,4-beta-D-glucan glucohydrolase (bglA) of Thermotoga neapolitana.